Reading from the N-terminus, the 145-residue chain is MTQAILETEKGTIRLQFFDNDAPNTVANFVKLSQDGFYDGLTFHRVIPGFMSQGGCPHGTGTGGPGYKIPCEINDNPHLAGTLSMAHAGRNTGGSQFFICHEPQPHLDGVHTTFGQTEDDESLKVVRSLRNGDRILSVKIVTDAA.

The region spanning 1-145 is the PPIase cyclophilin-type domain; it reads MTQAILETEK…LSVKIVTDAA (145 aa).

This sequence belongs to the cyclophilin-type PPIase family.

The enzyme catalyses [protein]-peptidylproline (omega=180) = [protein]-peptidylproline (omega=0). In terms of biological role, PPIases accelerate the folding of proteins. It catalyzes the cis-trans isomerization of proline imidic peptide bonds in oligopeptides. The polypeptide is Peptidyl-prolyl cis-trans isomerase (rot) (Synechococcus elongatus (strain ATCC 33912 / PCC 7942 / FACHB-805) (Anacystis nidulans R2)).